A 273-amino-acid chain; its full sequence is Putative pyruvate, phosphate dikinase regulatory protein (273 aa).

ADP is bound at residue glycine 151–threonine 158.

This sequence belongs to the pyruvate, phosphate/water dikinase regulatory protein family. PDRP subfamily.

It catalyses the reaction N(tele)-phospho-L-histidyl/L-threonyl-[pyruvate, phosphate dikinase] + ADP = N(tele)-phospho-L-histidyl/O-phospho-L-threonyl-[pyruvate, phosphate dikinase] + AMP + H(+). The enzyme catalyses N(tele)-phospho-L-histidyl/O-phospho-L-threonyl-[pyruvate, phosphate dikinase] + phosphate + H(+) = N(tele)-phospho-L-histidyl/L-threonyl-[pyruvate, phosphate dikinase] + diphosphate. In terms of biological role, bifunctional serine/threonine kinase and phosphorylase involved in the regulation of the pyruvate, phosphate dikinase (PPDK) by catalyzing its phosphorylation/dephosphorylation. This Desulfitobacterium hafniense (strain Y51) protein is Putative pyruvate, phosphate dikinase regulatory protein.